We begin with the raw amino-acid sequence, 469 residues long: MLCLCLYVPVHNSDQIEVEYFESNGLPSELKSLKSLSVLLPSQEFSTYRRWRKKSLKTEEKEHDGQLDFEEFVHYLQDHEKDLKLVFKSMDRKIAGQVNANDIVNSLRDLGVHISLKQAEKVLKSMDKNGTMTIDWNEWKKYPTLQPAENIPEIILYWKHSTIFDVGESLMVPDEFTVEEHLTGMWWRHLVSGGGAGAVSRTCTAPLDRLKVLMQVHGCQGKSMCLMSGLTQMIKEGGVRSLWRGNGINVIKIAPETALKFMAYEQIKRVMGSSQETLGISERFVAGSLAGVIAQSTIYPMEVLKTRLALRKTGQYKGISDCAKHILKTEGMSAFYKGYVPNMLGIIPYAGIDLAVYETLKNTWLQRYGTENADPGVFVLLACGTVSSTCGQLASYPLALIRTRMQAQASVEGSSQVSMTGLFKQIMKTEGPTGLYRGLTPNFLKVIPAVSISYVVYEHIKSTLGVRSR.

Over 1–189 (MLCLCLYVPV…EHLTGMWWRH (189 aa)) the chain is Mitochondrial intermembrane. EF-hand domains lie at 47–80 (TYRRWRKKSLKTEEKEHDGQLDFEEFVHYLQDHE), 78–113 (DHEKDLKLVFKSMDRKIAGQVNANDIVNSLRDLGVH), and 114–149 (ISLKQAEKVLKSMDKNGTMTIDWNEWKKYPTLQPAE). 3 residues coordinate Ca(2+): D64, Q66, and E71. Solcar repeat units lie at residues 184-270 (GMWW…IKRV), 278-363 (LGIS…LKNT), and 375-463 (PGVF…IKST). A helical membrane pass occupies residues 190-207 (LVSGGGAGAVSRTCTAPL). Residues 208–244 (DRLKVLMQVHGCQGKSMCLMSGLTQMIKEGGVRSLWR) are Mitochondrial matrix-facing. Residues 245–264 (GNGINVIKIAPETALKFMAY) traverse the membrane as a helical segment. Over 265-287 (EQIKRVMGSSQETLGISERFVAG) the chain is Mitochondrial intermembrane. Residues 288-301 (SLAGVIAQSTIYPM) traverse the membrane as a helical segment. Topologically, residues 302-337 (EVLKTRLALRKTGQYKGISDCAKHILKTEGMSAFYK) are mitochondrial matrix. Residues 338–357 (GYVPNMLGIIPYAGIDLAVY) form a helical membrane-spanning segment. The Mitochondrial intermembrane segment spans residues 358-380 (ETLKNTWLQRYGTENADPGVFVL). The helical transmembrane segment at 381-398 (LACGTVSSTCGQLASYPL) threads the bilayer. The Mitochondrial matrix portion of the chain corresponds to 399–437 (ALIRTRMQAQASVEGSSQVSMTGLFKQIMKTEGPTGLYR). The helical transmembrane segment at 438-457 (GLTPNFLKVIPAVSISYVVY) threads the bilayer. Topologically, residues 458–469 (EHIKSTLGVRSR) are mitochondrial intermembrane.

This sequence belongs to the mitochondrial carrier (TC 2.A.29) family.

The protein resides in the mitochondrion inner membrane. Functionally, calcium-dependent mitochondrial solute carrier. The polypeptide is Calcium-binding mitochondrial carrier protein SCaMC-2-A (slc25a25a) (Danio rerio (Zebrafish)).